Reading from the N-terminus, the 309-residue chain is MADERYNRKNPAVKRILQEVKEMQANPSDDFMSLPLEENIFEWQFAIRGPGDTEFEGGIYHGRIQLPADYPFKPPSFMLLTPNGRFETNTKICLSISNYHPEHWQPSWSVRTALVALIAFMPTSPNGALGSVDYPKDERRTLAIKSRETPPKYGSPERQKIIDEIHQYILSKATVVPKPLPLECSQAPSIVSEAHSQVEPQEAITVVEERSIATTDTIVDDQIIEETAEAVNTAASVVPAAAPLPAVEVVVKASVSGEQRMARRAAQKPVDDRLFTWAAVGLTIAIMVLLLKKFIKSNGYSTGFMDDQS.

The region spanning 11-166 is the UBC core domain; sequence PAVKRILQEV…ERQKIIDEIH (156 aa). The active-site Glycyl thioester intermediate is the Cys-93. Residues 275 to 295 form a helical membrane-spanning segment; it reads FTWAAVGLTIAIMVLLLKKFI.

It belongs to the ubiquitin-conjugating enzyme family.

Its subcellular location is the membrane. The catalysed reaction is S-ubiquitinyl-[E1 ubiquitin-activating enzyme]-L-cysteine + [E2 ubiquitin-conjugating enzyme]-L-cysteine = [E1 ubiquitin-activating enzyme]-L-cysteine + S-ubiquitinyl-[E2 ubiquitin-conjugating enzyme]-L-cysteine.. It functions in the pathway protein modification; protein ubiquitination. Its function is as follows. Accepts the ubiquitin from the E1 complex and catalyzes its covalent attachment to other proteins. In Arabidopsis thaliana (Mouse-ear cress), this protein is Ubiquitin-conjugating enzyme E2 32 (UBC32).